We begin with the raw amino-acid sequence, 62 residues long: Histone H1.2, embryonic (62 aa).

Residues 1-53 form the H15 domain; that stretch reads HVVAAITALKERGGSSMKKQSVFIKKALKSGVEKGTLVQVKGKGASGSFKLGK.

Belongs to the histone H1/H5 family.

Its subcellular location is the nucleus. It is found in the chromosome. Histones H1 are necessary for the condensation of nucleosome chains into higher-order structures. The polypeptide is Histone H1.2, embryonic (Parechinus angulosus (Angulate sea urchin)).